The chain runs to 279 residues: NAD-dependent protein deacylase (279 aa).

The region spanning 20–272 is the Deacetylase sirtuin-type domain; it reads RERLRQRIFF…PEFVEKLLKG (253 aa). Position 48–67 (48–67) interacts with NAD(+); sequence GAGISAESGIRTFRAADGLW. Substrate is bound by residues Tyr92 and Arg95. Residue 129–132 participates in NAD(+) binding; sequence QNID. His147 (proton acceptor) is an active-site residue. Positions 155 and 174 each coordinate Zn(2+). NAD(+)-binding positions include 214-216, 240-242, and Ala258; these read GTS and NLE.

It belongs to the sirtuin family. Class III subfamily. In terms of assembly, forms a 1:1 complex with acetyl-CoA synthetase (Acs). Zn(2+) is required as a cofactor.

Its subcellular location is the cytoplasm. The catalysed reaction is N(6)-acetyl-L-lysyl-[protein] + NAD(+) + H2O = 2''-O-acetyl-ADP-D-ribose + nicotinamide + L-lysyl-[protein]. The enzyme catalyses N(6)-succinyl-L-lysyl-[protein] + NAD(+) + H2O = 2''-O-succinyl-ADP-D-ribose + nicotinamide + L-lysyl-[protein]. It carries out the reaction N(6)-(2-hydroxyisobutanoyl)-L-lysyl-[protein] + NAD(+) + H2O = 2''-O-(2-hydroxyisobutanoyl)-ADP-D-ribose + nicotinamide + L-lysyl-[protein]. Its activity is regulated as follows. Deacetylation is inhibited by nicotinamide. Its function is as follows. NAD-dependent lysine deacetylase that specifically removes acetyl groups on target proteins. Also acts as a protein-lysine deacylase by mediating protein desuccinylation and de-2-hydroxyisobutyrylation. Modulates the activities of several proteins which are inactive in their acylated form. Activates the enzyme acetyl-CoA synthetase (acs) by deacetylating 'Lys-609' in the inactive, acetylated form of the enzyme. May also modulate the activity of other propionyl-adenosine monophosphate (AMP)-forming enzymes. The chain is NAD-dependent protein deacylase from Escherichia coli (strain K12).